The following is a 310-amino-acid chain: N-acyl-aromatic-L-amino acid amidohydrolase (carboxylate-forming) (310 aa).

Zn(2+) contacts are provided by H20 and E23. Residues R62 and 69 to 70 (NR) each bind substrate. H113 contributes to the Zn(2+) binding site. 2 residues coordinate substrate: E176 and Y286.

Belongs to the AspA/AstE family. Aspartoacylase subfamily. In terms of assembly, homotetramer. Requires Zn(2+) as cofactor.

It localises to the apical cell membrane. The protein resides in the cytoplasm. The enzyme catalyses an N-acyl-aromatic L-alpha-amino acid + H2O = an aromatic L-alpha-amino acid + a carboxylate. It carries out the reaction an N-acetyl-L-cysteine-S-conjugate + H2O = an S-substituted L-cysteine + acetate. Functionally, plays an important role in deacetylating mercapturic acids in kidney proximal tubules. The protein is N-acyl-aromatic-L-amino acid amidohydrolase (carboxylate-forming) (acy3) of Xenopus tropicalis (Western clawed frog).